A 286-amino-acid polypeptide reads, in one-letter code: Structure-specific endonuclease subunit SLX1 (286 aa).

One can recognise a GIY-YIG domain in the interval 15 to 98 (SFYGVYILKS…QHAYQTRHIN (84 aa)).

It belongs to the SLX1 family. Forms a heterodimer with SLX4. Requires a divalent metal cation as cofactor.

Its subcellular location is the nucleus. Functionally, catalytic subunit of the SLX1-SLX4 structure-specific endonuclease that resolves DNA secondary structures generated during DNA repair and recombination. Has endonuclease activity towards branched DNA substrates, introducing single-strand cuts in duplex DNA close to junctions with ss-DNA. This chain is Structure-specific endonuclease subunit SLX1, found in Candida dubliniensis (strain CD36 / ATCC MYA-646 / CBS 7987 / NCPF 3949 / NRRL Y-17841) (Yeast).